The sequence spans 242 residues: Protein fmp-52, mitochondrial (242 aa).

The N-terminal 87 residues, 1–87 (MSTSTPTSTA…VISSLGTTRV (87 aa)), are a transit peptide targeting the mitochondrion. The disordered stretch occupies residues 33-58 (SSQVQTISRRAPANPTNSSRLSPTVN). The span at 35–58 (QVQTISRRAPANPTNSSRLSPTVN) shows a compositional bias: polar residues.

This sequence belongs to the FMP52 family.

The protein localises to the mitochondrion outer membrane. The sequence is that of Protein fmp-52, mitochondrial (fmp-52) from Neurospora crassa (strain ATCC 24698 / 74-OR23-1A / CBS 708.71 / DSM 1257 / FGSC 987).